The sequence spans 123 residues: UPF0102 protein APP7_1414 (123 aa).

This sequence belongs to the UPF0102 family.

The polypeptide is UPF0102 protein APP7_1414 (Actinobacillus pleuropneumoniae serotype 7 (strain AP76)).